We begin with the raw amino-acid sequence, 208 residues long: Ubiquitin-conjugating enzyme E2 S (208 aa).

One can recognise a UBC core domain in the interval 14–160; the sequence is QTIRQVMKEL…ARMMTEIHAQ (147 aa). The active-site Glycyl thioester intermediate is the C98. Positions 161–193 are disordered; it reads PAKCGAGASDAKDDDGPSTKKHAGLDKKLQDKK. Over residues 170-193 the composition is skewed to basic and acidic residues; sequence DAKDDDGPSTKKHAGLDKKLQDKK.

This sequence belongs to the ubiquitin-conjugating enzyme family.

The catalysed reaction is S-ubiquitinyl-[E1 ubiquitin-activating enzyme]-L-cysteine + [E2 ubiquitin-conjugating enzyme]-L-cysteine = [E1 ubiquitin-activating enzyme]-L-cysteine + S-ubiquitinyl-[E2 ubiquitin-conjugating enzyme]-L-cysteine.. The protein operates within protein modification; protein ubiquitination. In terms of biological role, catalyzes the covalent attachment of ubiquitin to other proteins. Acts as an essential factor of the anaphase promoting complex/cyclosome (APC/C), a cell cycle-regulated ubiquitin ligase that controls progression through mitosis. Acts by specifically elongating polyubiquitin chains initiated by the E2 enzyme vih/UbcH10 on APC/C substrates, enhancing the degradation of APC/C substrates by the proteasome and promoting mitotic exit. The protein is Ubiquitin-conjugating enzyme E2 S of Drosophila virilis (Fruit fly).